We begin with the raw amino-acid sequence, 160 residues long: NADH-quinone oxidoreductase subunit I (160 aa).

4Fe-4S ferredoxin-type domains are found at residues R51–A80 and T91–N120. C60, C63, C66, C70, C100, C103, C106, and C110 together coordinate [4Fe-4S] cluster.

Belongs to the complex I 23 kDa subunit family. As to quaternary structure, NDH-1 is composed of 14 different subunits. Subunits NuoA, H, J, K, L, M, N constitute the membrane sector of the complex. The cofactor is [4Fe-4S] cluster.

It localises to the cell inner membrane. It carries out the reaction a quinone + NADH + 5 H(+)(in) = a quinol + NAD(+) + 4 H(+)(out). In terms of biological role, NDH-1 shuttles electrons from NADH, via FMN and iron-sulfur (Fe-S) centers, to quinones in the respiratory chain. The immediate electron acceptor for the enzyme in this species is believed to be ubiquinone. Couples the redox reaction to proton translocation (for every two electrons transferred, four hydrogen ions are translocated across the cytoplasmic membrane), and thus conserves the redox energy in a proton gradient. The polypeptide is NADH-quinone oxidoreductase subunit I (Neorickettsia sennetsu (strain ATCC VR-367 / Miyayama) (Ehrlichia sennetsu)).